Here is a 318-residue protein sequence, read N- to C-terminus: ATP-dependent (S)-NAD(P)H-hydrate dehydratase (318 aa).

The YjeF C-terminal domain maps to 3-313 (AREVFKRVIP…KEIGPAFDSL (311 aa)). Residues Gly-119 and 172-178 (NTNEFKR) each bind (6S)-NADPHX. Residues 210–214 (KGSKD) and 229–238 (TSLRRCGGQG) each bind ATP. (6S)-NADPHX is bound at residue Asp-239.

Belongs to the NnrD/CARKD family. Mg(2+) is required as a cofactor.

It is found in the cytoplasm. The catalysed reaction is (6S)-NADHX + ATP = ADP + phosphate + NADH + H(+). It carries out the reaction (6S)-NADPHX + ATP = ADP + phosphate + NADPH + H(+). Its function is as follows. Catalyzes the dehydration of the S-form of NAD(P)HX at the expense of ATP, which is converted to ADP. Together with NAD(P)HX epimerase, which catalyzes the epimerization of the S- and R-forms, the enzyme allows the repair of both epimers of NAD(P)HX, a damaged form of NAD(P)H that is a result of enzymatic or heat-dependent hydration. This chain is ATP-dependent (S)-NAD(P)H-hydrate dehydratase, found in Batrachochytrium dendrobatidis (strain JAM81 / FGSC 10211) (Frog chytrid fungus).